The following is a 707-amino-acid chain: Ribosomal RNA large subunit methyltransferase K/L (707 aa).

In terms of domain architecture, THUMP spans 44 to 155 (VIYNLCLWSR…NDILTVSFDL (112 aa)).

It belongs to the methyltransferase superfamily. RlmKL family.

It localises to the cytoplasm. It carries out the reaction guanosine(2445) in 23S rRNA + S-adenosyl-L-methionine = N(2)-methylguanosine(2445) in 23S rRNA + S-adenosyl-L-homocysteine + H(+). The enzyme catalyses guanosine(2069) in 23S rRNA + S-adenosyl-L-methionine = N(2)-methylguanosine(2069) in 23S rRNA + S-adenosyl-L-homocysteine + H(+). In terms of biological role, specifically methylates the guanine in position 2445 (m2G2445) and the guanine in position 2069 (m7G2069) of 23S rRNA. This chain is Ribosomal RNA large subunit methyltransferase K/L, found in Legionella pneumophila (strain Paris).